The chain runs to 530 residues: Sugar transport protein MST6 (530 aa).

Residues 1 to 18 (MAGGVVVNNGGGKDYPGK) lie on the Cytoplasmic side of the membrane. A helical transmembrane segment spans residues 19 to 39 (LTMFVLFACIVAATGGLIFGY). Residues 40–81 (DIGISGGVTSMNPFLIKFFPSVYRKEQAAEKNQSNQYCKFDS) are Extracellular-facing. Residues 82–102 (PLLTMFTSSLYLAALVASFFA) form a helical membrane-spanning segment. Residues 103–119 (STVTRVAGRKWSMFGGG) lie on the Cytoplasmic side of the membrane. The chain crosses the membrane as a helical span at residues 120 to 140 (VTFLVGAALNGAAKNVLMLIL). Residues 141-142 (GR) are Extracellular-facing. The helical transmembrane segment at 143-163 (VLLGVGVGFANQSVPLYLSEM) threads the bilayer. Topologically, residues 164-169 (APARLR) are cytoplasmic. The helical transmembrane segment at 170–190 (GMLNIGFQLMITIGILCANLI) threads the bilayer. Over 191 to 204 (NYGTAKIKGGWGWR) the chain is Extracellular. Residues 205–225 (VSLALAAVPAAIIAVGALFLP) traverse the membrane as a helical segment. The Cytoplasmic portion of the chain corresponds to 226–291 (DTPNSLIDRG…YRPQLTMAIA (66 aa)). A helical membrane pass occupies residues 292 to 312 (IPLFQQLTGINVIMFYAPVLF). Over 313–323 (KTLGFADDASL) the chain is Extracellular. The chain crosses the membrane as a helical span at residues 324-344 (MSAVITGLVNVFATFVSIVTV). The Cytoplasmic portion of the chain corresponds to 345 to 359 (DRLGRRKLFLQGGTQ). The helical transmembrane segment at 360–380 (MLACQIVVGSLIGAKFGFSGV) threads the bilayer. The Extracellular portion of the chain corresponds to 381–388 (ADIPKAYA). A helical transmembrane segment spans residues 389–409 (AFVVLFICAYVAGFAWSWGPL). Topologically, residues 410–428 (GWLVPSEIFPLEIRSAGQS) are cytoplasmic. The helical transmembrane segment at 429 to 449 (INVSVNMLFTFIIAQAFLPML) threads the bilayer. Topologically, residues 450–453 (CRFK) are extracellular. A helical membrane pass occupies residues 454–474 (FILFFFFGAWVVIMTLFVAFF). At 475–530 (LPETKNVPIEEMVLVWKSHWYWGRFIRDEDVHVGADVEMPAAGNRNGKVDPAKLAN) the chain is on the cytoplasmic side.

The protein belongs to the major facilitator superfamily. Sugar transporter (TC 2.A.1.1) family. As to expression, expressed in leaf blades, leaf sheaths, anthers, ovaries and embryos. Expressed at low levels in roots and shoots.

The protein localises to the cell membrane. Mediates active uptake of hexoses by sugar:proton symport. Can transport glucose, fructose, mannose, galactose, xylose and ribose. This Oryza sativa subsp. japonica (Rice) protein is Sugar transport protein MST6.